Consider the following 514-residue polypeptide: Alstonine synthase (514 aa).

A helical membrane pass occupies residues 4 to 24 (PQFSCLLPAFFLLVVFLFLLI). N-linked (GlcNAc...) asparagine glycosylation occurs at Asn428. Cys450 is a heme binding site.

This sequence belongs to the cytochrome P450 family. Requires heme as cofactor.

The protein resides in the membrane. It carries out the reaction tetrahydroalstonine + A + reduced [NADPH--hemoprotein reductase] + O2 = alstonine + AH2 + oxidized [NADPH--hemoprotein reductase] + 2 H2O + H(+). It participates in alkaloid biosynthesis. In terms of biological role, a cytochrome P450 monooxygenase involved in the biosynthesis of pentacyclic alkaloids natural products such as alstonine, putative antipsychotic compounds. Catalyzes the conversion of tetrahydroalstonine to alstonine. No oxidative activity towards ajmalicine. The chain is Alstonine synthase from Alstonia scholaris (Dogbane).